Here is a 216-residue protein sequence, read N- to C-terminus: 3-keto-L-gulonate-6-phosphate decarboxylase UlaD (216 aa).

Position 11 (D11) interacts with substrate. The Mg(2+) site is built by E33 and D62. Substrate is bound at residue R192.

This sequence belongs to the HPS/KGPDC family. KGPDC subfamily. Homodimer. Mg(2+) serves as cofactor.

The catalysed reaction is 3-dehydro-L-gulonate 6-phosphate + H(+) = L-xylulose 5-phosphate + CO2. It participates in cofactor degradation; L-ascorbate degradation; D-xylulose 5-phosphate from L-ascorbate: step 2/4. Functionally, catalyzes the decarboxylation of 3-keto-L-gulonate-6-P into L-xylulose-5-P. Is involved in the anaerobic L-ascorbate utilization. This is 3-keto-L-gulonate-6-phosphate decarboxylase UlaD from Shigella dysenteriae serotype 1 (strain Sd197).